A 301-amino-acid chain; its full sequence is Tetrahydromethanopterin S-methyltransferase subunit E (301 aa).

5 helical membrane-spanning segments follow: residues 85–105 (VIFAIAIGALVASAVHGTYCI), 130–150 (HTPVMMGYAFITTFCILVVSY), 151–171 (IMVAVLAHPFPLTLLAFIWGI), 232–252 (PVTGLAFGMTVFLSGWVTAVF), and 258–278 (LTMGWLSVAAGVILVLLLIIW).

This sequence belongs to the MtrE family. As to quaternary structure, the complex is composed of 8 subunits; MtrA, MtrB, MtrC, MtrD, MtrE, MtrF, MtrG and MtrH.

The protein resides in the cell membrane. The catalysed reaction is 5-methyl-5,6,7,8-tetrahydromethanopterin + coenzyme M + 2 Na(+)(in) = 5,6,7,8-tetrahydromethanopterin + methyl-coenzyme M + 2 Na(+)(out). Part of a complex that catalyzes the formation of methyl-coenzyme M and tetrahydromethanopterin from coenzyme M and methyl-tetrahydromethanopterin. This is an energy-conserving, sodium-ion translocating step. This Methanococcoides burtonii (strain DSM 6242 / NBRC 107633 / OCM 468 / ACE-M) protein is Tetrahydromethanopterin S-methyltransferase subunit E.